The following is a 564-amino-acid chain: Hexose transporter HXT13 (564 aa).

Residues 1 to 52 are Cytoplasmic-facing; that stretch reads MSSAQSSIDSDGDVRDADIHVAPPVEKEWSDGFDDNEVINGDNVEPPKRGLI. Residues 53 to 73 form a helical membrane-spanning segment; sequence GYLVIYLLCYPISFGGFLPGW. Residues 74 to 109 are Extracellular-facing; the sequence is DSGITAGFINMDNFKMNFGSYKHSTGEYYLSNVRMG. Residues 110–130 form a helical membrane-spanning segment; that stretch reads LLVAMFSIGCAIGGLIFARLA. Residues 131–136 are Cytoplasmic-facing; the sequence is DTLGRR. Residues 137–157 traverse the membrane as a helical segment; that stretch reads LAIVIVVLVYMVGAIIQISSN. Over 158 to 167 the chain is Extracellular; that stretch reads HKWYQYFVGK. Residues 168–188 form a helical membrane-spanning segment; it reads IIYGLGAGGCSVLCPMLLSEI. At 189 to 194 the chain is on the cytoplasmic side; the sequence is APTDLR. Residues 195 to 215 traverse the membrane as a helical segment; the sequence is GGLVSLYQLNMTFGIFLGYCS. The Extracellular portion of the chain corresponds to 216 to 229; that stretch reads VYGTRKYDNTAQWR. A helical membrane pass occupies residues 230–250; that stretch reads VPLGLCFLWALIIIIGMLLVP. Topologically, residues 251 to 333 are cytoplasmic; that stretch reads ESPRYLIECE…VQTFLQLTGE (83 aa). Residues 334-350 traverse the membrane as a helical segment; that stretch reads NYFFFYGTTIFKSVGLT. At 351–356 the chain is on the extracellular side; that stretch reads DGFETS. The chain crosses the membrane as a helical span at residues 357–374; it reads IVLGTVNFFSTIIAVMVV. The Cytoplasmic segment spans residues 375-381; the sequence is DKIGRRK. A helical membrane pass occupies residues 382–402; it reads CLLFGAAGMMACMVIFASIGV. Topologically, residues 403–424 are extracellular; the sequence is KCLYPHGQDGPSSKGAGNAMIV. The helical transmembrane segment at 425–445 threads the bilayer; that stretch reads FTCFYIFCFATTWAPVAYIVV. Over 446–462 the chain is Cytoplasmic; sequence AESFPSKVKSRAMSIST. A helical transmembrane segment spans residues 463–483; it reads ACNWLWQFLIGFFTPFITGSI. A topological domain (extracellular) is located at residue histidine 484. Residues 485 to 505 form a helical membrane-spanning segment; the sequence is FYYGYVFVGCLVAMFLYVFFF. Residues 506–564 are Cytoplasmic-facing; that stretch reads LPETIGLSLEEIQLLYEEGIKPWKSASWVPPSRRGISSEESKTEKKDWKKFLKFSKNSD. The tract at residues 530–551 is disordered; that stretch reads SASWVPPSRRGISSEESKTEKK. Over residues 541–551 the composition is skewed to basic and acidic residues; sequence ISSEESKTEKK.

The protein belongs to the major facilitator superfamily. Sugar transporter (TC 2.A.1.1) family.

It is found in the membrane. Probable glucose transporter. The sequence is that of Hexose transporter HXT13 (HXT13) from Saccharomyces cerevisiae (strain ATCC 204508 / S288c) (Baker's yeast).